We begin with the raw amino-acid sequence, 260 residues long: MQIALLCEDLNRQSELEAIATRWGLTHDEDNVFALVLTTQQLELRKRDEPKLGAIFVDLVSGAVAHRRKFGGGKGQSIAKAVGLNKGATPLVLDGTAGLGRDAFVLASLGCKVQMVERHPVVAALLDDGLSRAKHDADIGGWVSQRMSLLHASSHDALEQLMAQDDFVQPDVVYLDPMYPHPENKKKSALVKKEMRVFQSLVGADNDADALLAPALLMATKRVVVKRPDYAEWLDNQKPSMAIETKKNRFDVYVNAGMKS.

S-adenosyl-L-methionine contacts are provided by residues 101–102 (RD), 117–118 (ER), 153–154 (SS), and D176.

The protein belongs to the methyltransferase superfamily. RsmJ family.

It localises to the cytoplasm. The enzyme catalyses guanosine(1516) in 16S rRNA + S-adenosyl-L-methionine = N(2)-methylguanosine(1516) in 16S rRNA + S-adenosyl-L-homocysteine + H(+). Specifically methylates the guanosine in position 1516 of 16S rRNA. The chain is Ribosomal RNA small subunit methyltransferase J from Aliivibrio salmonicida (strain LFI1238) (Vibrio salmonicida (strain LFI1238)).